A 170-amino-acid chain; its full sequence is Ureidoglycolate lyase (170 aa).

The protein belongs to the ureidoglycolate lyase family. As to quaternary structure, homodimer. Ni(2+) is required as a cofactor.

It carries out the reaction (S)-ureidoglycolate = urea + glyoxylate. The protein operates within nitrogen metabolism; (S)-allantoin degradation. Catalyzes the catabolism of the allantoin degradation intermediate (S)-ureidoglycolate, generating urea and glyoxylate. Involved in the utilization of allantoin as nitrogen source. This Burkholderia mallei (strain NCTC 10247) protein is Ureidoglycolate lyase.